The following is a 435-amino-acid chain: Tryptophan synthase beta chain (435 aa).

At lysine 92 the chain carries N6-(pyridoxal phosphate)lysine.

This sequence belongs to the TrpB family. Tetramer of two alpha and two beta chains. Pyridoxal 5'-phosphate is required as a cofactor.

It catalyses the reaction (1S,2R)-1-C-(indol-3-yl)glycerol 3-phosphate + L-serine = D-glyceraldehyde 3-phosphate + L-tryptophan + H2O. It participates in amino-acid biosynthesis; L-tryptophan biosynthesis; L-tryptophan from chorismate: step 5/5. The beta subunit is responsible for the synthesis of L-tryptophan from indole and L-serine. The polypeptide is Tryptophan synthase beta chain (Albidiferax ferrireducens (strain ATCC BAA-621 / DSM 15236 / T118) (Rhodoferax ferrireducens)).